We begin with the raw amino-acid sequence, 214 residues long: Soluble inorganic pyrophosphatase (214 aa).

The segment at 1-20 (MSEEDKTAASAEQPKRAPKL) is disordered. Substrate-binding residues include lysine 64, arginine 78, and tyrosine 90. Mg(2+)-binding residues include aspartate 100, aspartate 105, and aspartate 137. Tyrosine 174 serves as a coordination point for substrate.

This sequence belongs to the PPase family. Requires Mg(2+) as cofactor.

The protein localises to the cytoplasm. The catalysed reaction is diphosphate + H2O = 2 phosphate + H(+). In Zea mays (Maize), this protein is Soluble inorganic pyrophosphatase (IPP).